A 1464-amino-acid polypeptide reads, in one-letter code: MKKSRKYATLDSDKIAKISLALATPDDVESWSHGEVTKPETINYKSYKPERGGLFDEIIFGPMIDYRCPICGHKYKKINEGSFCSKTELCKQEKVEILPKISRRNHMGHIKLNSPVVHFWFFKVDHSIIFKLLDLTVAGRPNTEPVRRIDLENLIYYKSHIVLESGGIKALPKNLIIDINVAAVIYKDALEELITRFEPGTEDYEDIRETLDNLIEKASSKIGQDYGIDFYELNEVIEHYSEAKIGTGAQAIEYLLKNLDLQKEKELVSAKIKKINDEEIMSGAKIASTSRQTREKLYKRLQVINAFIESKQEPTSMLIYNLPVIPADLRPLIQLDGGRHSTSDINELYRRVIIRNNRLKQWQEKDAPTLVIQNELRMIQEAVDALIDNARRSPNPVLSKDNRPFKSISDALTGKKGRFRQNLLGKRVDYSGRSVIVVGPNLKMHQCGIPREMAAKLFEPWIIHRLIEKEVATTIKNAKKMLEDQNPVIWPHIAEVIKGRLVLLNRAPTLHRLSIQAFEPVLVRGKAIRLHPLVCTPFNADFDGDQMAVHVPISERALLESRELMLANKNILGTKDGEPIINPSQDMILGIYYLTIEEPGALGEGRIFDNYEHMIRAYEAKKVSLHARVALPIEEVKNSKIKAFASRESQRYIISTVGKFIFNNIFPKSFPFIFDNKVTEATSLEQYSEKVNKYIIPAGTNVIEHIKMELPVLDAFNKKNIAKIIRYVFDKYVAALTLQDVAGVIDQLNDVPLSNIVLNYLNLKTYDDRKVDQEHAIILAALTRSATEKTKARSQRHIEGLEVPLNAEEKAEILDDVWFRYTNMVASILDDIKDLGFKYSSLSGITFAISDILETDKKPEYIAEGDAYIAQLKQYYNDGLISDDDRYSLTIKKWTDIKAKVQGELQQIIKENPRNPIITMINSGARGNISNYVQLAGMRGLMANNTKSTRADVKNERVVRSTVEIPVKSSFIEGLTAFEFYSSTHGTRKGATDTALNTAKSGYLTRRLVDVAQNIVVRKENCGSDYGHIVRDIVDTKNGQIIVPLKERIIGRYANKPIIGEKTKQELAKRNTLITDKLAQKIIDEGVKEVEIRSVLGCNTKNGVCKMCFGKDLATNRVVNIGEAVGIIAAQSIGEPGTQLTMRVFHTGGVAGAEDITGGFPRLIELIDAHEQPWGRPAVISPYEGEIVEDLVEDKNVNSHLLTIKVVNSKKETVNKKVHVYTTKKLRVKVGDHVKVGQKLSEGPVIVKELLELTDTITVQNYLLKEIQKIYRIQGIAISDKYIEIIIRQMMSKIVIHDPGDSKFFAGAIVDIFDYQEENATLLSQRKRPAFGKVVIKGAKQVPLLSDSFLAAASYQETSKILVHAAISSRSDSLSGLKENIIVGKKIPAGTALYPFESHSKYDIRPSIDYFRKPELETSDSEFIPVDLESYHQELEDEQQQIIEVDDSDISVEDEENDFYENED.

Positions 541, 543, and 545 each coordinate Mg(2+). Positions 1022, 1098, 1105, and 1108 each coordinate Zn(2+). Residues 1435 to 1464 (LEDEQQQIIEVDDSDISVEDEENDFYENED) form a disordered region.

Belongs to the RNA polymerase beta' chain family. The RNAP catalytic core consists of 2 alpha, 1 beta, 1 beta' and 1 omega subunit. When a sigma factor is associated with the core the holoenzyme is formed, which can initiate transcription. Mg(2+) serves as cofactor. Requires Zn(2+) as cofactor.

It catalyses the reaction RNA(n) + a ribonucleoside 5'-triphosphate = RNA(n+1) + diphosphate. In terms of biological role, DNA-dependent RNA polymerase catalyzes the transcription of DNA into RNA using the four ribonucleoside triphosphates as substrates. The sequence is that of DNA-directed RNA polymerase subunit beta' from Metamycoplasma arthritidis (strain 158L3-1) (Mycoplasma arthritidis).